Consider the following 592-residue polypeptide: Methionine--tRNA ligase (592 aa).

Positions 12 to 22 match the 'HIGH' region motif; that stretch reads PYANGPFHVGH. Zn(2+) contacts are provided by Cys144, Cys147, Cys157, and Cys160. The 'KMSKS' region signature appears at 342–346; the sequence is KMSTS. Thr345 contacts ATP.

It belongs to the class-I aminoacyl-tRNA synthetase family. MetG type 1 subfamily. In terms of assembly, monomer. Zn(2+) serves as cofactor.

Its subcellular location is the cytoplasm. The catalysed reaction is tRNA(Met) + L-methionine + ATP = L-methionyl-tRNA(Met) + AMP + diphosphate. In terms of biological role, is required not only for elongation of protein synthesis but also for the initiation of all mRNA translation through initiator tRNA(fMet) aminoacylation. The chain is Methionine--tRNA ligase from Roseiflexus castenholzii (strain DSM 13941 / HLO8).